A 127-amino-acid chain; its full sequence is Large ribosomal subunit protein uL24A (127 aa).

Belongs to the universal ribosomal protein uL24 family. As to quaternary structure, component of the large ribosomal subunit (LSU). Mature yeast ribosomes consist of a small (40S) and a large (60S) subunit. The 40S small subunit contains 1 molecule of ribosomal RNA (18S rRNA) and 33 different proteins (encoded by 57 genes). The large 60S subunit contains 3 rRNA molecules (25S, 5.8S and 5S rRNA) and 46 different proteins (encoded by 81 genes).

Its subcellular location is the cytoplasm. Its function is as follows. Component of the ribosome, a large ribonucleoprotein complex responsible for the synthesis of proteins in the cell. The small ribosomal subunit (SSU) binds messenger RNAs (mRNAs) and translates the encoded message by selecting cognate aminoacyl-transfer RNA (tRNA) molecules. The large subunit (LSU) contains the ribosomal catalytic site termed the peptidyl transferase center (PTC), which catalyzes the formation of peptide bonds, thereby polymerizing the amino acids delivered by tRNAs into a polypeptide chain. The nascent polypeptides leave the ribosome through a tunnel in the LSU and interact with protein factors that function in enzymatic processing, targeting, and the membrane insertion of nascent chains at the exit of the ribosomal tunnel. The protein is Large ribosomal subunit protein uL24A of Saccharomyces cerevisiae (strain ATCC 204508 / S288c) (Baker's yeast).